We begin with the raw amino-acid sequence, 122 residues long: Small ribosomal subunit protein bS6 (122 aa).

It belongs to the bacterial ribosomal protein bS6 family.

In terms of biological role, binds together with bS18 to 16S ribosomal RNA. The protein is Small ribosomal subunit protein bS6 of Neisseria meningitidis serogroup C (strain 053442).